Here is a 302-residue protein sequence, read N- to C-terminus: Zinc transporter ZIP1 (302 aa).

The Extracellular portion of the chain corresponds to 1–6 (MDYLLQ). Residues 7 to 27 (VKVGALVGLLLLTLFFGFIPA) traverse the membrane as a helical segment. Residues 28–44 (RMKWFHVTGGTELHKAV) lie on the Cytoplasmic side of the membrane. Residues 45 to 65 (LSFVSCFAGGVFLSACLLDII) traverse the membrane as a helical segment. The Extracellular portion of the chain corresponds to 66 to 86 (PDYLSDIHGELQKRDLDDGFP). Residues 87 to 107 (LPEFIMACGFFTVLILEKMVL) form a helical membrane-spanning segment. The Cytoplasmic portion of the chain corresponds to 108-158 (SCTEGHRNEETAPLLAPAAPNGHAHGHPSVNDLEGSGHHVHVDFHAHSSFR). Residues 159–179 (SFMLFLSLSLHSVFEGLAIGL) form a helical membrane-spanning segment. The Extracellular portion of the chain corresponds to 180–185 (QTTNAK). Residues 186–206 (VLEICIAILVHKSIIVFSLSV) form a helical membrane-spanning segment. Residues 207–219 (KLVQSAVKPLWVV) lie on the Cytoplasmic side of the membrane. Residues 220–240 (LYVTVFAIMSPLGIGIGIVVI) form a helical membrane-spanning segment. Over 241-247 (ETERQAG) the chain is Extracellular. A helical membrane pass occupies residues 248 to 268 (GLIQAVLEGLAAGTFIYITFL). The Cytoplasmic segment spans residues 269-281 (EILPHELNSSERP). A helical transmembrane segment spans residues 282–302 (LLKVLFLLCGFSIMAALCFLG).

The protein belongs to the ZIP transporter (TC 2.A.5) family. Ubiquitous. Highest levels in ovary, high levels in heart, eye, kidney and brain, moderate levels in intestine and low levels in gill and skin.

Its subcellular location is the cell membrane. The protein resides in the endoplasmic reticulum membrane. It carries out the reaction Zn(2+)(in) = Zn(2+)(out). Transporter for the divalent cation Zn(2+). Mediates the influx of Zn(2+) into cells from extracellular space. This Danio rerio (Zebrafish) protein is Zinc transporter ZIP1 (slc39a1).